The chain runs to 513 residues: MASGSVAECLQQETTCPVCLQYFAEPMMLDCGHNICCACLARCWGTAETNVSCPQCRETFPQRHMRPNRHLANVTQLVKQLRTERPSGPGGEMGVCEKHREPLKLYCEEDQMPICVVCDRSREHRGHSVLPLEEAVEGFKEQIQNQLDHLKRVKDLKKRRRAQGEQARAELLSLTQMEREKIVWEFEQLYHSLKEHEYRLLARLEELDLAIYNSINGAITQFSCNISHLSSLIAQLEEKQQQPTRELLQDIGDTLSRAERIRIPEPWITPPDLQEKIHIFAQKCLFLTESLKQFTEKMQSDMEKIQELREAQLYSVDVTLDPDTAYPSLILSDNLRQVRYSYLQQDLPDNPERFNLFPCVLGSPCFIAGRHYWEVEVGDKAKWTIGVCEDSVCRKGGVTSAPQNGFWAVSLWYGKEYWALTSPMTALPLRTPLQRVGIFLDYDAGEVSFYNVTERCHTFTFSHATFCGPVRPYFSLSYSGGKSAAPLIICPMSGIDGFSGHVGNHGHSMETSP.

The segment at 16 to 57 adopts an RING-type zinc-finger fold; sequence CPVCLQYFAEPMMLDCGHNICCACLARCWGTAETNVSCPQCR. Cys-96, His-99, Cys-118, and His-124 together coordinate Zn(2+). Residues 96–127 form a B box-type zinc finger; that stretch reads CEKHREPLKLYCEEDQMPICVVCDRSREHRGH. 2 coiled-coil regions span residues 132 to 172 and 282 to 311; these read LEEA…AELL and QKCL…LREA. A B30.2/SPRY domain is found at 298 to 492; sequence MQSDMEKIQE…SAAPLIICPM (195 aa).

It belongs to the TRIM/RBCC family. As to quaternary structure, homomultimerizes. Part of a complex consisting of TRIM27, USP7 and MAGEL2; directly interacts with USP7. Interacts with PML, EIF3S6, EPC1, CHD4 and EID1. Interacts with MAGED4, MAGEF1 and MAGEL2. Interacts with PTPN11. Interacts with autophagy receptor p62/SQSTM1. (Microbial infection) Interacts with M.tuberculosis PtpA, whick blocks TRIM27-promoted JNK/p38 MAPK pathway activation and cell apoptosis. In terms of assembly, (Microbial infection) Interacts with herpes simplex virus protein ICP0. Expressed in testis namely within the seminiferous tubules.

Its subcellular location is the nucleus. It is found in the cytoplasm. The protein resides in the PML body. It localises to the early endosome. The protein localises to the mitochondrion. The catalysed reaction is S-ubiquitinyl-[E2 ubiquitin-conjugating enzyme]-L-cysteine + [acceptor protein]-L-lysine = [E2 ubiquitin-conjugating enzyme]-L-cysteine + N(6)-ubiquitinyl-[acceptor protein]-L-lysine.. The protein operates within protein modification; protein ubiquitination. In terms of biological role, E3 ubiquitin-protein ligase that mediates ubiquitination of various substrates and thereby plays a role in diffent processes including proliferation, innate immunity, apoptosis, immune response or autophagy. Ubiquitinates PIK3C2B and inhibits its activity by mediating the formation of 'Lys-48'-linked polyubiquitin chains; the function inhibits CD4 T-cell activation. Acts as a regulator of retrograde transport: together with MAGEL2, mediates the formation of 'Lys-63'-linked polyubiquitin chains at 'Lys-220' of WASHC1, leading to promote endosomal F-actin assembly. Has a transcriptional repressor activity by cooperating with EPC1. Induces apoptosis by activating Jun N-terminal kinase and p38 kinase and also increases caspase-3-like activity independently of mitochondrial events. May function in male germ cell development. Has DNA-binding activity and preferentially bound to double-stranded DNA. Forms a complex with and ubiquitinates the ubiquitin-specific protease USP7, which in turn deubiquitinates RIPK1 resulting in the positive regulation of TNF-alpha-induced apoptosis. In addition, acts with USP7 or PTPN11 as an inhibitor of the antiviral signaling pathway by promoting kinase TBK1 ubiquitination and degradation. Acts as a negative regulator of NOD2 signaling by mediating ubiquitination of NOD2, promoting its degradation by the proteasome. Alternatively, facilitates mitophagy via stabilization of active TBK1. Negatively regulates autophagy flux under basal conditions by directly polyubiquitinating ULK1. During starvation-induced autophagy, catalyzes non-degradative ubiquitination of the kinase STK38L promoting its activation and phosphorylation of ULK1 leading to its ubiquitination and degradation to restrain the amplitude and duration of autophagy. Its function is as follows. (Microbial infection) Positively regulates hepatitis C virus replication by suppressing type I IFN response during infection. The sequence is that of Zinc finger protein RFP from Homo sapiens (Human).